The primary structure comprises 220 residues: Octanoyltransferase (220 aa).

The region spanning 29–217 (GRAPEMIWLL…CFEETFGPLP (189 aa)) is the BPL/LPL catalytic domain. Substrate-binding positions include 68–75 (RGGQYTYH), 148–150 (AIG), and 161–163 (GLS). Cysteine 179 serves as the catalytic Acyl-thioester intermediate.

The protein belongs to the LipB family.

The protein resides in the cytoplasm. The enzyme catalyses octanoyl-[ACP] + L-lysyl-[protein] = N(6)-octanoyl-L-lysyl-[protein] + holo-[ACP] + H(+). It participates in protein modification; protein lipoylation via endogenous pathway; protein N(6)-(lipoyl)lysine from octanoyl-[acyl-carrier-protein]: step 1/2. Its function is as follows. Catalyzes the transfer of endogenously produced octanoic acid from octanoyl-acyl-carrier-protein onto the lipoyl domains of lipoate-dependent enzymes. Lipoyl-ACP can also act as a substrate although octanoyl-ACP is likely to be the physiological substrate. The protein is Octanoyltransferase of Dinoroseobacter shibae (strain DSM 16493 / NCIMB 14021 / DFL 12).